The chain runs to 242 residues: Protein MHF1 homolog (242 aa).

The segment at 208–242 (LKAKEPQSERKRKKGSAKKEDKASSSNAVRITTDL) is disordered. The segment covering 231-242 (SSSNAVRITTDL) has biased composition (polar residues).

The protein belongs to the TAF9 family. CENP-S/MHF1 subfamily.

The protein resides in the nucleus. Involved in the promotion of spontaneous somatic homologous recombination (HR) events, which is opposite to the function of FANCM in ordered HR. Only FANCM is essential for replicative repair in the absence of the endonuclease MUS81. Acts in the same pathway as FANCM to restrain class II meiotic crossing over (CO), and acts with FANCM during meiosis to repair interstrand cross-links (ICLs). This common pathway between MHF1 and FANCM is in parallel to the pathway that involves the RECQ4A helicase. The sequence is that of Protein MHF1 homolog from Arabidopsis thaliana (Mouse-ear cress).